Consider the following 115-residue polypeptide: Mobilization protein MbeC (115 aa).

This sequence to E.coli MbaC and MbkC. Homodimer. Interacts with MbeA and MbeB to form the relaxosome.

In terms of biological role, required for efficient mobilization of ColE1 plasmid and is thus essential to promote the specific transfer of the plasmid during conjugation. Probably functions by inducing DNA bending, helping the MbeA relaxase to melt the DNA around the nic site and cleave the phosphodiester bond. Binds specifically double-stranded DNA (dsDNA) containing the ColE1 oriT but does not recognize the inverted repeat (IR). The protein is Mobilization protein MbeC (mbeC) of Escherichia coli.